Here is a 260-residue protein sequence, read N- to C-terminus: MYFAVIGTHVRGKSASPAMHNASFKTLGINAVYIALDVPREELPCFLQLARLNLRGFNVTIPHKEEVVKYLDSVAADARAIGAVNTVLVERNLLVGYNTDASALYQLASSHMKGADVLIVGAGGAARAALFAAIKAEARAVYITNRTYERAEALAREFAEKFKREVKAVRGPVKADVVINATPVYDAVVADLSGASLYVDFAYIPTPRTKMVEEAQRLGIKVIDGVDLLVEQGAQAEKIWLGVEPDRTVMKRAVLEFLGI.

Shikimate-binding positions include Ser-14–Ser-16 and Thr-60. Lys-64 functions as the Proton acceptor in the catalytic mechanism. The shikimate site is built by Asn-85 and Asp-100. Residues Gly-121–Ala-125, Asn-145–Arg-150, and Phe-201 contribute to the NADP(+) site. Residue Tyr-203 participates in shikimate binding. Gly-225 provides a ligand contact to NADP(+).

It belongs to the shikimate dehydrogenase family. As to quaternary structure, homodimer.

The catalysed reaction is shikimate + NADP(+) = 3-dehydroshikimate + NADPH + H(+). The protein operates within metabolic intermediate biosynthesis; chorismate biosynthesis; chorismate from D-erythrose 4-phosphate and phosphoenolpyruvate: step 4/7. Involved in the biosynthesis of the chorismate, which leads to the biosynthesis of aromatic amino acids. Catalyzes the reversible NADPH linked reduction of 3-dehydroshikimate (DHSA) to yield shikimate (SA). In Pyrobaculum islandicum (strain DSM 4184 / JCM 9189 / GEO3), this protein is Shikimate dehydrogenase (NADP(+)).